Consider the following 816-residue polypeptide: Coiled-coil and C2 domain-containing protein 1-like (816 aa).

Residues 1 to 11 (MFSRKKPEPAK) are compositionally biased toward basic and acidic residues. Disordered regions lie at residues 1-135 (MFSR…TFLP), 157-176 (ANAK…RGLK), and 186-269 (AAGK…RQTD). Positions 25–47 (IPDDFDPSAGYGEDDGGDSDLEA) are enriched in acidic residues. The segment covering 73–85 (DLDKMIADSLRDV) has biased composition (basic and acidic residues). The span at 86–100 (SDDDDDDNLESDPDL) shows a compositional bias: acidic residues. Over residues 122–131 (PPAASEEPVQ) the composition is skewed to low complexity. Positions 145 to 200 (IKQRLEMYKQAEANAKTAGDSGKARRFGRGLKTLKDLHRQAAAGKSINVDDIPPEV) are DM14 1. The segment covering 220–243 (PSTPASPPPVPSRAAPDPPTPGTP) has biased composition (pro residues). DM14 regions lie at residues 265–317 (SRQT…MPPP) and 365–419 (LQQR…LPVP). Positions 355–382 (LAAATNMLEALQQRLEKYQSVEAAAKAE) form a coiled coil. The interval 418–492 (VPPGFGPLPT…TRTSGNQQKN (75 aa)) is disordered. A compositionally biased stretch (low complexity) spans 424–433 (PLPTADAAPV). A compositionally biased stretch (pro residues) spans 434–449 (APTPSLPTSPTSPPPT). A compositionally biased stretch (low complexity) spans 450 to 471 (ASTSAGGTPSSSSATTPTAPRK). Over residues 483–492 (TRTSGNQQKN) the composition is skewed to polar residues. The segment at 502–556 (LLERQKEFKLAAIEAKKAGEIDQAKEYLKIFKGFDSLLNAASSGLPVDLSTLPVP) is DM14 4. The C2 domain occupies 637-776 (RKNEPLPKFH…ETKCEIHDTY (140 aa)).

The protein belongs to the CC2D1 family. As to quaternary structure, interacts (via DM14 domains 1 and 3) with shrb; the interaction is direct and blocks access to the surface involved in shrb polymerization. This interaction may be required for the ESCRT-III complex role in multivesicular body formation.

Its subcellular location is the cytoplasm. The protein resides in the cytosol. It localises to the apicolateral cell membrane. It is found in the cell cortex. The protein localises to the endosome. Functionally, phosphatidyl inositol monophosphate binding protein involved in endosomal protein sorting through regulation of the endosomal sorting required for transport (ESCRT) pathway. Required for full activity of the ESCRT-III complex core component shrb/shrub, probably by preventing its inappropriate polymerisation. Required, but not essential, for the efficient generation of intraluminal vesicles (ILVs) in multivesicular bodies (MVBs). Involved in a late stage of the endosomal pathway targeting transmembrane proteins of the plasma membrane for lysosomal degradation. Plays a critical role in regulation of multiple signal transduction pathways, including the Notch and BMP/decapentaplegic (dpp) signaling pathways, through targeting of membrane bound receptors to multivesicular bodies, isolating them from the cytoplasm and targeting them for lysosomal degradation. Involved in targeting N/Notch for endosomal degradation, negatively regulating the Notch signaling pathway. Regulates Notch signaling in imaginal disk cells and follicle cells during oogenesis and multiple developmental processes, including development of wings, veins, legs, eyes and bristles. Restricts the activity of Notch to the dorsoventral (D/V) boundary of the wing imaginal disk. In external sensory organ development regulates Notch signaling during asymmetric cell division and differentiation of sensory organ precursor cells. May be involved in regulation of apoptosis and cell growth independent of Notch signaling. Involved in targeting tkv for endosomal degradation, negatively regulating the BMP/decapentaplegic (dpp) signaling pathway. Regulates the BMP/dpp signaling pathway in follicle cells during oogenesis, but not in imaginal disk cells during wing development. May be involved in differentiation or morphogenesis of peripodial epithelial cells in the developing imaginal disk. Involved in abscission of germline cells during oogenesis. This Drosophila melanogaster (Fruit fly) protein is Coiled-coil and C2 domain-containing protein 1-like.